Here is a 771-residue protein sequence, read N- to C-terminus: Transcription factor Sp3 (771 aa).

2 disordered regions span residues 1–47 (MTAP…QDAQ) and 60–79 (KIGP…ASHS). Residues 34-47 (ASASAAAAAPQDAQ) show a composition bias toward low complexity. Residue K109 forms a Glycyl lysine isopeptide (Lys-Gly) (interchain with G-Cter in SUMO) linkage. 2 transactivation domain (Gln-rich) regions span residues 129-228 (QYVL…VQVQ) and 341-489 (EQNA…TLGQ). Positions 451–459 (ITWQTFQVQ) match the 9aaTAD motif. Positions 524–610 (IQLHQGENAG…RGSNLGKKKQ (87 aa)) are repressor domain. The residue at position 541 (K541) is an N6-acetyllysine; alternate. K541 is covalently cross-linked (Glycyl lysine isopeptide (Lys-Gly) (interchain with G-Cter in SUMO); alternate). 3 C2H2-type zinc fingers span residues 611–635 (HICH…LRWH), 641–665 (FVCN…RRTH), and 671–693 (FVCP…IKTH).

The protein belongs to the Sp1 C2H2-type zinc-finger protein family. In terms of assembly, interacts with HDAC1 and HDAC2; the interaction deacetylates SP3 and regulates its transcriptional activity. Interacts with v-Jun. In terms of processing, acetylated by histone acetyltransferase p300, deacetylated by HDACs. Acetylation/deacetylation states regulate transcriptional activity. Acetylation appears to activate transcription. Alternate sumoylation and acetylation at Lys-541 also control transcriptional activity. Post-translationally, sumoylation represses transcriptional activity. Lys-541 is the major site. Sumoylation at this site promotes nuclear localization to the nuclear periphery, nuclear dots and PML nuclear bodies. Alternate sumoylation and acetylation at Lys-541 also control transcriptional activity.

It is found in the nucleus. It localises to the PML body. Functionally, transcriptional factor that can act as an activator or repressor depending on post-translational modifications. Binds to GT and GC boxes promoter elements. Competes with SP1 for the GC-box promoters. Weak activator of transcription. Required for activation of SPARC transcription. The polypeptide is Transcription factor Sp3 (SP3) (Gallus gallus (Chicken)).